Reading from the N-terminus, the 236-residue chain is UPF0257 lipoprotein YnfC (236 aa).

A signal peptide spans 1-16; that stretch reads MKYKLLPCLLAIFLTG. Cysteine 17 carries the N-palmitoyl cysteine lipid modification. The S-diacylglycerol cysteine moiety is linked to residue cysteine 17.

The protein belongs to the UPF0257 family.

The protein resides in the cell membrane. This chain is UPF0257 lipoprotein YnfC, found in Escherichia coli O7:K1 (strain IAI39 / ExPEC).